A 336-amino-acid polypeptide reads, in one-letter code: MKERIVNLETLDFEISQEVSLRPSLWEDFIGQEKIKSNLQISICAAKKRQESLDHMLFFGPPGLGKTSISHIIAKEMETNIKITAAPMIEKSGDLAAILTNLQAKDILFIDEIHRLSPAIEEVLYPAMEDFRLDIIIGSGPAAQTIKIDLPPFTLIGATTRAGMLSNPLRDRFGMSFRMQFYNPSELALIIKKAAVKLNQDIKQESADEIAKRSRGTPRIALRLLKRVRDFALVKNSSLMDLNITLHALNELGVNELGFDEADLAYLSLLANAQGKPVGLNTIAASMREDEGTIEDVIEPFLLANGYLERTAKGRIATPKTHELLKIPTLNPQTLF.

A large ATPase domain (RuvB-L) region spans residues 1–182; that stretch reads MKERIVNLET…FGMSFRMQFY (182 aa). Residues Leu21, Arg22, Gly63, Lys66, Thr67, Ser68, 129-131, Arg172, Tyr182, and Arg219 each bind ATP; that span reads EDF. A Mg(2+)-binding site is contributed by Thr67. Residues 183–253 form a small ATPAse domain (RuvB-S) region; sequence NPSELALIIK…ITLHALNELG (71 aa). Residues 256–336 are head domain (RuvB-H); the sequence is ELGFDEADLA…IPTLNPQTLF (81 aa). DNA-binding residues include Arg310 and Arg315.

This sequence belongs to the RuvB family. In terms of assembly, homohexamer. Forms an RuvA(8)-RuvB(12)-Holliday junction (HJ) complex. HJ DNA is sandwiched between 2 RuvA tetramers; dsDNA enters through RuvA and exits via RuvB. An RuvB hexamer assembles on each DNA strand where it exits the tetramer. Each RuvB hexamer is contacted by two RuvA subunits (via domain III) on 2 adjacent RuvB subunits; this complex drives branch migration. In the full resolvosome a probable DNA-RuvA(4)-RuvB(12)-RuvC(2) complex forms which resolves the HJ.

The protein localises to the cytoplasm. The enzyme catalyses ATP + H2O = ADP + phosphate + H(+). Functionally, the RuvA-RuvB-RuvC complex processes Holliday junction (HJ) DNA during genetic recombination and DNA repair, while the RuvA-RuvB complex plays an important role in the rescue of blocked DNA replication forks via replication fork reversal (RFR). RuvA specifically binds to HJ cruciform DNA, conferring on it an open structure. The RuvB hexamer acts as an ATP-dependent pump, pulling dsDNA into and through the RuvAB complex. RuvB forms 2 homohexamers on either side of HJ DNA bound by 1 or 2 RuvA tetramers; 4 subunits per hexamer contact DNA at a time. Coordinated motions by a converter formed by DNA-disengaged RuvB subunits stimulates ATP hydrolysis and nucleotide exchange. Immobilization of the converter enables RuvB to convert the ATP-contained energy into a lever motion, pulling 2 nucleotides of DNA out of the RuvA tetramer per ATP hydrolyzed, thus driving DNA branch migration. The RuvB motors rotate together with the DNA substrate, which together with the progressing nucleotide cycle form the mechanistic basis for DNA recombination by continuous HJ branch migration. Branch migration allows RuvC to scan DNA until it finds its consensus sequence, where it cleaves and resolves cruciform DNA. This chain is Holliday junction branch migration complex subunit RuvB, found in Helicobacter pylori (strain ATCC 700392 / 26695) (Campylobacter pylori).